A 508-amino-acid chain; its full sequence is Methionine--tRNA ligase (508 aa).

Residues 12 to 22 (YYVNDIPHIGH) carry the 'HIGH' region motif. The 'KMSKS' region signature appears at 295–299 (KISKS). ATP is bound at residue K298.

The protein belongs to the class-I aminoacyl-tRNA synthetase family. MetG type 2B subfamily. In terms of assembly, monomer.

It is found in the cytoplasm. It carries out the reaction tRNA(Met) + L-methionine + ATP = L-methionyl-tRNA(Met) + AMP + diphosphate. Functionally, is required not only for elongation of protein synthesis but also for the initiation of all mRNA translation through initiator tRNA(fMet) aminoacylation. In Rickettsia conorii (strain ATCC VR-613 / Malish 7), this protein is Methionine--tRNA ligase.